Consider the following 430-residue polypeptide: MRVYTADVKPEMEGQKVTLYGWVHEVRDLGGLVFILLRDREGIVQITLPRKFVSKQVFKLAKKIRRESVIAVTGEVRREEKAPGGVEIIPESIEVLNEADAPLPLEVTEKVPAELDTRLDHRFMDLRRPRVQAIFRIRHQVMQSVREFLSEEGFIEVHTPKIVSTATEGGTELFPISYFEKEAFLNQSPQLYKQVLMAAGFEKVFEIGPIFRAEEHNTTRHLNEAISIDIEMSFTDHNGVMDVLERLVQRVYEDVAEKCERYLGWLEVSLEIPELPFPRITYDEAREIAARKGEEIPWGEDLSTNALKLVGEEMGGLYFITDWPTESKPFYAMPYEDRPEISKSFDLMHGWLELSSGAQRIHLYDMLVESIKAKGMEPESFGFYLEAFRYGMPPHAGWGLGAERLIMSMLGLKNVREAVLFPRDRHRLVP.

E168 serves as a coordination point for L-aspartate. The interval 190–193 (QLYK) is aspartate. R212 serves as a coordination point for L-aspartate. Residues 212–214 (RAE), 220–222 (RHL), and E353 each bind ATP. E353 and S356 together coordinate Mg(2+). The L-aspartate site is built by S356 and R360. Residue 401-404 (GAER) participates in ATP binding.

The protein belongs to the class-II aminoacyl-tRNA synthetase family. Type 2 subfamily. Homodimer. It depends on Mg(2+) as a cofactor.

It is found in the cytoplasm. It catalyses the reaction tRNA(Asx) + L-aspartate + ATP = L-aspartyl-tRNA(Asx) + AMP + diphosphate. Its function is as follows. Aspartyl-tRNA synthetase with relaxed tRNA specificity since it is able to aspartylate not only its cognate tRNA(Asp) but also tRNA(Asn). Reaction proceeds in two steps: L-aspartate is first activated by ATP to form Asp-AMP and then transferred to the acceptor end of tRNA(Asp/Asn). This Archaeoglobus fulgidus (strain ATCC 49558 / DSM 4304 / JCM 9628 / NBRC 100126 / VC-16) protein is Aspartate--tRNA(Asp/Asn) ligase.